The following is a 342-amino-acid chain: S-adenosylmethionine:tRNA ribosyltransferase-isomerase (342 aa).

This sequence belongs to the QueA family. Monomer.

It localises to the cytoplasm. The enzyme catalyses 7-aminomethyl-7-carbaguanosine(34) in tRNA + S-adenosyl-L-methionine = epoxyqueuosine(34) in tRNA + adenine + L-methionine + 2 H(+). The protein operates within tRNA modification; tRNA-queuosine biosynthesis. Its function is as follows. Transfers and isomerizes the ribose moiety from AdoMet to the 7-aminomethyl group of 7-deazaguanine (preQ1-tRNA) to give epoxyqueuosine (oQ-tRNA). The sequence is that of S-adenosylmethionine:tRNA ribosyltransferase-isomerase from Campylobacter jejuni subsp. jejuni serotype O:2 (strain ATCC 700819 / NCTC 11168).